The primary structure comprises 158 residues: MFLNKKYPSLIEKKMDDLMTLKFCYLIITFLIITNIFSLAINIWGGGDMIDRQSCENIFYCPKDWVGYNNACYYFSNNNKNYTDANNYCKNSHNSTLANNDTKLLNLTKLLNLSKLYYNDSTYWVKYSLPKNKAVTLRNSTYKYDRVKYTETFFICSN.

The Cytoplasmic segment spans residues 1–26 (MFLNKKYPSLIEKKMDDLMTLKFCYL). A helical membrane pass occupies residues 27–47 (IITFLIITNIFSLAINIWGGG). Residues 48-158 (DMIDRQSCEN…YTETFFICSN (111 aa)) are Extracellular-facing. Cysteine 61 and cysteine 72 are joined by a disulfide. The lectin-like stretch occupies residues 61–157 (CPKDWVGYNN…KYTETFFICS (97 aa)). N-linked (GlcNAc...) asparagine; by host glycans are attached at residues asparagine 81, asparagine 94, asparagine 100, asparagine 106, asparagine 112, asparagine 119, and asparagine 139.

It belongs to the asfivirus lectin-like protein family. In terms of assembly, homodimer.

It is found in the host endoplasmic reticulum membrane. In terms of biological role, down-regulates MHC-I expression by impairing the appropriate configuration or presentation into the plasma membrane of the latter. Participates in viral hemadsorption, which may help viral spread. Reduces the transactivating activity of host TP53, thus inhibiting apoptosis. Non-essential for virus growth in swine macrophage cell cultures. In African swine fever virus (isolate Pig/Kenya/KEN-50/1950) (ASFV), this protein is Lectin-like protein EP153R.